Reading from the N-terminus, the 152-residue chain is Small ribosomal subunit protein uS13 (152 aa).

This sequence belongs to the universal ribosomal protein uS13 family.

It is found in the cytoplasm. Its function is as follows. Located at the top of the head of the 40S subunit, it contacts several helices of the 18S rRNA. The protein is Small ribosomal subunit protein uS13 (RPS18) of Branchiostoma belcheri (Amphioxus).